The sequence spans 241 residues: Fatty acid metabolism regulator protein (241 aa).

An HTH gntR-type domain is found at 11–79 (QSPAALAEEY…HGKPTKVNNI (69 aa)). Positions 39–58 (ERDLADKIGVTRTTLREVLQ) form a DNA-binding region, H-T-H motif.

In terms of assembly, homodimer.

It is found in the cytoplasm. Its function is as follows. Multifunctional regulator of fatty acid metabolism. The sequence is that of Fatty acid metabolism regulator protein from Haemophilus influenzae (strain PittEE).